A 145-amino-acid chain; its full sequence is 3-dehydroquinate dehydratase (145 aa).

Residue Tyr-24 is the Proton acceptor of the active site. Substrate is bound by residues Asn-75, His-81, and Asp-88. The active-site Proton donor is His-101. Residues 102–103 (IS) and Arg-112 contribute to the substrate site.

It belongs to the type-II 3-dehydroquinase family. As to quaternary structure, homododecamer.

It catalyses the reaction 3-dehydroquinate = 3-dehydroshikimate + H2O. It participates in metabolic intermediate biosynthesis; chorismate biosynthesis; chorismate from D-erythrose 4-phosphate and phosphoenolpyruvate: step 3/7. Catalyzes a trans-dehydration via an enolate intermediate. This chain is 3-dehydroquinate dehydratase, found in Rhizobium etli (strain CIAT 652).